A 104-amino-acid polypeptide reads, in one-letter code: Complex III assembly factor LYRM7 (104 aa).

Ser-60 carries the phosphoserine modification.

The protein belongs to the complex I LYR family. Interacts with UQCRFS1.

It localises to the mitochondrion matrix. Its function is as follows. Assembly factor required for Rieske Fe-S protein UQCRFS1 incorporation into the cytochrome b-c1 (CIII) complex. Functions as a chaperone, binding to this subunit within the mitochondrial matrix and stabilizing it prior to its translocation and insertion into the late CIII dimeric intermediate within the mitochondrial inner membrane. This is Complex III assembly factor LYRM7 (LYRM7) from Bos taurus (Bovine).